The primary structure comprises 205 residues: Large ribosomal subunit protein bL21 (205 aa).

A disordered region spans residues Ala-107–Ala-137. The segment covering Ala-122–Ala-137 has biased composition (low complexity).

It belongs to the bacterial ribosomal protein bL21 family. As to quaternary structure, part of the 50S ribosomal subunit. Contacts protein L20.

Functionally, this protein binds to 23S rRNA in the presence of protein L20. The sequence is that of Large ribosomal subunit protein bL21 from Hyphomonas neptunium (strain ATCC 15444).